A 584-amino-acid polypeptide reads, in one-letter code: MGAKSVTASSSKKIKNRHNGKVKKSKKIKKVRKPQKSISLNDENEVEILPSRNEQETNKLPKDHVTADGILVLEHKSDDDEGFDVYDGHFDNPTDIPSTTEESKTPSLAVHGDEKDLANNDDFISLSASSEDEQAEQEEEREKQELEIKKEKQKEILNTDYPWILNHDHSKQKEISDWLTFEIKDFVAYISPSREEIEIRNQTISTIREAVKQLWPDADLHVFGSYSTDLYLPGSDIDCVVTSELGGKESRNNLYSLASHLKKKNLATEVEVVAKARVPIIKFVEPHSGIHIDVSFERTNGIEAAKLIREWLDDTPGLRELVLIVKQFLHARRLNNVHTGGLGGFSIICLVFSFLHMHPRIITNEIDPKDNLGVLLIEFFELYGKNFGYDDVALGSSDGYPVYFPKSTWSAIQPIKNPFSLAIQDPGDESNNISRGSFNIRDIKKAFAGAFDLLTNRCFELHSATFKDRLGKSILGNVIKYRGKARDFKDERGLVLNKAIIENENYHKKRSRIIHDEDFAEDTVTSTATATTTDDDYEITNPPAKKAKIEEKPESEPAKRNSGETYITVSSEDDDEDGYNPYTL.

A compositionally biased stretch (polar residues) spans 1–11 (MGAKSVTASSS). Disordered regions lie at residues 1-63 (MGAK…LPKD) and 81-147 (EGFD…QELE). Over residues 12–35 (KKIKNRHNGKVKKSKKIKKVRKPQ) the composition is skewed to basic residues. Positions 53–63 (NEQETNKLPKD) are enriched in basic and acidic residues. A compositionally biased stretch (acidic residues) spans 130 to 139 (SEDEQAEQEE). 2 residues coordinate Mg(2+): aspartate 236 and aspartate 238. The ATP site is built by glycine 301, lysine 326, asparagine 431, and arginine 435. The region spanning 371–431 (NLGVLLIEFF…AIQDPGDESN (61 aa)) is the PAP-associated domain. The tract at residues 525-584 (TSTATATTTDDDYEITNPPAKKAKIEEKPESEPAKRNSGETYITVSSEDDDEDGYNPYTL) is disordered. Positions 547–562 (AKIEEKPESEPAKRNS) are enriched in basic and acidic residues.

Belongs to the DNA polymerase type-B-like family. As to quaternary structure, component of the TRAMP complex (also called TRF4 complex) composed of at least HUL4, MTR4, PAP2/TRF4 and either AIR1 or AIR2. Interacts with NOP53 and POL2. Interacts directly with AIR2. Requires Mg(2+) as cofactor. The cofactor is Mn(2+).

Its subcellular location is the nucleus. The catalysed reaction is RNA(n) + ATP = RNA(n)-3'-adenine ribonucleotide + diphosphate. Functionally, catalytic subunit of the TRAMP complex which has a poly(A) RNA polymerase activity and is involved in a post-transcriptional quality control mechanism limiting inappropriate expression of genetic information. Polyadenylation is required for the degradative activity of the exosome on several of its nuclear RNA substrates like cryptic transcripts generated by RNA polymerase II and III, or hypomethylated pre-tRNAi-Met. Polyadenylates RNA processing and degradation intermediates of snRNAs, snoRNAs and mRNAs that accumulate in strains lacking a functional exosome. TRF4 is also required for proper nuclear division in mitosis, DNA damage repair and sister chromatid cohesion. Involved in the regulation of histone mRNA levels. May mediate mitotic chromosome condensation. This chain is Poly(A) RNA polymerase protein 2 (PAP2), found in Saccharomyces cerevisiae (strain ATCC 204508 / S288c) (Baker's yeast).